We begin with the raw amino-acid sequence, 385 residues long: 8-amino-7-oxononanoate synthase (385 aa).

Residue Arg-21 coordinates substrate. 108 to 109 contributes to the pyridoxal 5'-phosphate binding site; the sequence is GF. A substrate-binding site is contributed by His-133. Pyridoxal 5'-phosphate contacts are provided by Ser-179, His-207, and Thr-233. Lys-236 is modified (N6-(pyridoxal phosphate)lysine). A substrate-binding site is contributed by Thr-352.

The protein belongs to the class-II pyridoxal-phosphate-dependent aminotransferase family. BioF subfamily. In terms of assembly, homodimer. Pyridoxal 5'-phosphate serves as cofactor.

The enzyme catalyses 6-carboxyhexanoyl-[ACP] + L-alanine + H(+) = (8S)-8-amino-7-oxononanoate + holo-[ACP] + CO2. It functions in the pathway cofactor biosynthesis; biotin biosynthesis. Functionally, catalyzes the decarboxylative condensation of pimeloyl-[acyl-carrier protein] and L-alanine to produce 8-amino-7-oxononanoate (AON), [acyl-carrier protein], and carbon dioxide. The protein is 8-amino-7-oxononanoate synthase of Klebsiella pneumoniae (strain 342).